Reading from the N-terminus, the 190-residue chain is Elongation factor P-like protein (190 aa).

This sequence belongs to the elongation factor P family.

The protein is Elongation factor P-like protein of Pectobacterium atrosepticum (strain SCRI 1043 / ATCC BAA-672) (Erwinia carotovora subsp. atroseptica).